Here is a 164-residue protein sequence, read N- to C-terminus: NADH-quinone oxidoreductase subunit I (164 aa).

4Fe-4S ferredoxin-type domains are found at residues 55 to 85 and 95 to 124; these read LRRY…IDAE and TRYD…EGPN. Positions 65, 68, 71, 75, 104, 107, 110, and 114 each coordinate [4Fe-4S] cluster.

Belongs to the complex I 23 kDa subunit family. As to quaternary structure, NDH-1 is composed of 14 different subunits. Subunits NuoA, H, J, K, L, M, N constitute the membrane sector of the complex. [4Fe-4S] cluster serves as cofactor.

The protein resides in the cell inner membrane. It catalyses the reaction a quinone + NADH + 5 H(+)(in) = a quinol + NAD(+) + 4 H(+)(out). Functionally, NDH-1 shuttles electrons from NADH, via FMN and iron-sulfur (Fe-S) centers, to quinones in the respiratory chain. The immediate electron acceptor for the enzyme in this species is believed to be ubiquinone. Couples the redox reaction to proton translocation (for every two electrons transferred, four hydrogen ions are translocated across the cytoplasmic membrane), and thus conserves the redox energy in a proton gradient. This is NADH-quinone oxidoreductase subunit I from Ruegeria sp. (strain TM1040) (Silicibacter sp.).